The following is a 471-amino-acid chain: 3-isopropylmalate dehydratase large subunit (471 aa).

Residues Cys347, Cys407, and Cys410 each coordinate [4Fe-4S] cluster.

This sequence belongs to the aconitase/IPM isomerase family. LeuC type 1 subfamily. In terms of assembly, heterodimer of LeuC and LeuD. [4Fe-4S] cluster serves as cofactor.

The catalysed reaction is (2R,3S)-3-isopropylmalate = (2S)-2-isopropylmalate. It participates in amino-acid biosynthesis; L-leucine biosynthesis; L-leucine from 3-methyl-2-oxobutanoate: step 2/4. In terms of biological role, catalyzes the isomerization between 2-isopropylmalate and 3-isopropylmalate, via the formation of 2-isopropylmaleate. This Buchnera aphidicola subsp. Baizongia pistaciae (strain Bp) protein is 3-isopropylmalate dehydratase large subunit.